Reading from the N-terminus, the 570-residue chain is Chaperonin GroEL 1 (570 aa).

ATP-binding positions include 42–45, K63, 99–103, G427, and D507; these read TLGP and DGTTT. Residues 537–570 are disordered; sequence EDEDDDDGGGGGGGGMPAGGAGGMGGMGGMGGMM. The span at 545 to 570 shows a compositional bias: gly residues; that stretch reads GGGGGGGMPAGGAGGMGGMGGMGGMM.

It belongs to the chaperonin (HSP60) family. In terms of assembly, forms a cylinder of 14 subunits composed of two heptameric rings stacked back-to-back. Interacts with the co-chaperonin GroES.

It is found in the cytoplasm. The enzyme catalyses ATP + H2O + a folded polypeptide = ADP + phosphate + an unfolded polypeptide.. In terms of biological role, together with its co-chaperonin GroES, plays an essential role in assisting protein folding. The GroEL-GroES system forms a nano-cage that allows encapsulation of the non-native substrate proteins and provides a physical environment optimized to promote and accelerate protein folding. The protein is Chaperonin GroEL 1 of Salinibacter ruber (strain DSM 13855 / M31).